We begin with the raw amino-acid sequence, 129 residues long: MSASLVRATVRAVSKRKLQPTRAALTLTPSAVNKIKQLLKDKPEHVGVKVGVRTRGCNGLSYTLEYTKTKGDSDEEVIQDGVRVFIEKKAQLTLLGTEMDYVEDKLSSEFVFNNPNIKGTCGCGESFNI.

The N-terminal 12 residues, methionine 1–alanine 12, are a transit peptide targeting the mitochondrion. Cysteine 57, cysteine 121, and cysteine 123 together coordinate Fe cation.

It belongs to the HesB/IscA family. As to quaternary structure, interacts with CRY2, but not with CRY1 (in vitro).

The protein resides in the mitochondrion. Involved in the maturation of mitochondrial 4Fe-4S proteins functioning late in the iron-sulfur cluster assembly pathway. Probably involved in the binding of an intermediate of Fe/S cluster assembly. This is Iron-sulfur cluster assembly 1 homolog, mitochondrial (ISCA1) from Bos taurus (Bovine).